Reading from the N-terminus, the 493-residue chain is Cytochrome c-552 (493 aa).

A signal peptide spans 1–25 (MEKKLKSWQGWLLFCGAMAVVFVLG). Residue His116 participates in heme c binding. Heme contacts are provided by Cys144, Cys147, and Lys148. Positions 182, 185, 186, 224, 227, and 228 each coordinate heme c. 4 residues coordinate Ca(2+): Glu230, Tyr231, Lys276, and Gln278. Tyr231 lines the substrate pocket. Residue His279 participates in substrate binding. 9 residues coordinate heme c: His290, Cys297, Cys300, His301, His315, Cys328, Cys331, His332, and His407.

The protein belongs to the cytochrome c-552 family. Ca(2+) is required as a cofactor. Heme c serves as cofactor.

The protein resides in the periplasm. It catalyses the reaction 6 Fe(III)-[cytochrome c] + NH4(+) + 2 H2O = 6 Fe(II)-[cytochrome c] + nitrite + 8 H(+). It participates in nitrogen metabolism; nitrate reduction (assimilation). In terms of biological role, catalyzes the reduction of nitrite to ammonia, consuming six electrons in the process. This Bacteroides fragilis (strain YCH46) protein is Cytochrome c-552.